The chain runs to 320 residues: Mitochondrial thiamine pyrophosphate carrier (320 aa).

Solcar repeat units lie at residues 13–106 (NTKL…LTEL), 116–202 (REFS…LKHL), and 214–309 (NENL…FCNV). The helical transmembrane segment at 19 to 39 (AVAGSVSGLVTRALISPFDVI) threads the bilayer. At S51 the chain carries Phosphoserine. 4 consecutive transmembrane segments (helical) span residues 87-107 (ILSIGYGAVQFLSFEMLTELV), 122-142 (FVCGGLAACTATLTVHPVDVL), 173-193 (VFYKGLAPTLIAIFPYAGLQF), and 220-240 (LLCGSGAGVISKTLTYPLDLF). The Substrate recognition motif lies at 241-246 (KKRLQV). A helical transmembrane segment spans residues 293 to 313 (ALSTGFMFFWYEFFCNVFHCM).

The protein belongs to the mitochondrial carrier (TC 2.A.29) family.

The protein localises to the mitochondrion membrane. It catalyses the reaction thiamine phosphate(out) + thiamine diphosphate(in) = thiamine phosphate(in) + thiamine diphosphate(out). Its function is as follows. Mitochondrial transporter mediating uptake of thiamine diphosphate into mitochondria. It is not clear if the antiporter activity is affected by the membrane potential or by the proton electrochemical gradient. In Macaca fascicularis (Crab-eating macaque), this protein is Mitochondrial thiamine pyrophosphate carrier (SLC25A19).